A 295-amino-acid chain; its full sequence is Protoheme IX farnesyltransferase 2 (295 aa).

The next 9 membrane-spanning stretches (helical) occupy residues 9–29 (ITKPGIIFGNVLSVAGGFFLA), 36–56 (FALFLAVVIGTSLVVASGCVF), 83–103 (LPLALIYATLLGVAGFSLLYV), 108–128 (LSAFCALIGFIVYVGFYSLWL), 135–155 (GTLVGSLSGAMPPVIGYCAVS), 163–183 (VTLLVMFSLWQMPHSFAIAIF), 209–229 (IVLYVLAFVLATLMLTLGGYA), 230–250 (GLGYLAVAAAMGLYWLYMAWG), and 264–284 (VFGFSILTVTALSVMMGVDSQ).

Belongs to the UbiA prenyltransferase family. Protoheme IX farnesyltransferase subfamily.

It localises to the cell inner membrane. The catalysed reaction is heme b + (2E,6E)-farnesyl diphosphate + H2O = Fe(II)-heme o + diphosphate. The protein operates within porphyrin-containing compound metabolism; heme O biosynthesis; heme O from protoheme: step 1/1. Its function is as follows. Converts heme B (protoheme IX) to heme O by substitution of the vinyl group on carbon 2 of heme B porphyrin ring with a hydroxyethyl farnesyl side group. The polypeptide is Protoheme IX farnesyltransferase 2 (Pseudomonas putida (strain GB-1)).